A 72-amino-acid polypeptide reads, in one-letter code: Toxin Acra II-2 (72 aa).

Residues 3-67 form the LCN-type CS-alpha/beta domain; sequence VPGNYPLNTN…VWNAAKNYCK (65 aa). Cystine bridges form between Cys-18-Cys-41, Cys-27-Cys-46, and Cys-31-Cys-48.

This sequence belongs to the long (3 C-C) scorpion toxin superfamily. Sodium channel inhibitor family. Beta subfamily. As to expression, expressed by the venom gland.

The protein resides in the secreted. Functionally, binds to sodium channels (Nav) and affects the channel activation process. The chain is Toxin Acra II-2 from Androctonus crassicauda (Arabian fat-tailed scorpion).